The sequence spans 394 residues: Putative pectate lyase 17 (394 aa).

An N-terminal signal peptide occupies residues 1–22 (MTHFTVSCLLVALFLCQSLVHA). Asp192, Asp216, and Asp220 together coordinate Ca(2+). The active site involves Arg272.

It belongs to the polysaccharide lyase 1 family. The cofactor is Ca(2+).

The enzyme catalyses Eliminative cleavage of (1-&gt;4)-alpha-D-galacturonan to give oligosaccharides with 4-deoxy-alpha-D-galact-4-enuronosyl groups at their non-reducing ends.. Its pathway is glycan metabolism; pectin degradation; 2-dehydro-3-deoxy-D-gluconate from pectin: step 2/5. This Arabidopsis thaliana (Mouse-ear cress) protein is Putative pectate lyase 17.